The following is a 261-amino-acid chain: Cytochrome c oxidase subunit 3 (261 aa).

Residues 1–15 (MAHQAHSYHMVDPSP) are Mitochondrial matrix-facing. Residues 16-34 (WPIFGAITALLTTSGLIMW) form a helical membrane-spanning segment. Topologically, residues 35–40 (FHYNSI) are mitochondrial intermembrane. A helical transmembrane segment spans residues 41–66 (ALLTAGLLSMLLVMIQWWRDVVREST). Over 67-72 (FQGHHT) the chain is Mitochondrial matrix. The chain crosses the membrane as a helical span at residues 73-105 (PTVQKGLRYGMILFITSEAFFFLGFFWAFFHSS). The Mitochondrial intermembrane portion of the chain corresponds to 106-128 (LAPTPELGGQWPPTGIKPLNPLE). The chain crosses the membrane as a helical span at residues 129 to 152 (VPLLNTAILLASGVTVTWAHHSIT). Over 153-155 (EGN) the chain is Mitochondrial matrix. A helical transmembrane segment spans residues 156–183 (RKQAIHALTLTILLGFYFTALQAMEYHE). Topologically, residues 184-190 (ASFSIAD) are mitochondrial intermembrane. Residues 191 to 223 (SVYGSTFFVATGFHGLHVIIGSSFLTICLLRLI) traverse the membrane as a helical segment. Residues 224–232 (KFHFTSNHH) lie on the Mitochondrial matrix side of the membrane. The helical transmembrane segment at 233-256 (FGFEAAAWYWHFVDIIWLFLYMSM) threads the bilayer. The Mitochondrial intermembrane segment spans residues 257–261 (YWWGS).

It belongs to the cytochrome c oxidase subunit 3 family. Component of the cytochrome c oxidase (complex IV, CIV), a multisubunit enzyme composed of 14 subunits. The complex is composed of a catalytic core of 3 subunits MT-CO1, MT-CO2 and MT-CO3, encoded in the mitochondrial DNA, and 11 supernumerary subunits COX4I, COX5A, COX5B, COX6A, COX6B, COX6C, COX7A, COX7B, COX7C, COX8 and NDUFA4, which are encoded in the nuclear genome. The complex exists as a monomer or a dimer and forms supercomplexes (SCs) in the inner mitochondrial membrane with NADH-ubiquinone oxidoreductase (complex I, CI) and ubiquinol-cytochrome c oxidoreductase (cytochrome b-c1 complex, complex III, CIII), resulting in different assemblies (supercomplex SCI(1)III(2)IV(1) and megacomplex MCI(2)III(2)IV(2)).

The protein resides in the mitochondrion inner membrane. The enzyme catalyses 4 Fe(II)-[cytochrome c] + O2 + 8 H(+)(in) = 4 Fe(III)-[cytochrome c] + 2 H2O + 4 H(+)(out). Its function is as follows. Component of the cytochrome c oxidase, the last enzyme in the mitochondrial electron transport chain which drives oxidative phosphorylation. The respiratory chain contains 3 multisubunit complexes succinate dehydrogenase (complex II, CII), ubiquinol-cytochrome c oxidoreductase (cytochrome b-c1 complex, complex III, CIII) and cytochrome c oxidase (complex IV, CIV), that cooperate to transfer electrons derived from NADH and succinate to molecular oxygen, creating an electrochemical gradient over the inner membrane that drives transmembrane transport and the ATP synthase. Cytochrome c oxidase is the component of the respiratory chain that catalyzes the reduction of oxygen to water. Electrons originating from reduced cytochrome c in the intermembrane space (IMS) are transferred via the dinuclear copper A center (CU(A)) of subunit 2 and heme A of subunit 1 to the active site in subunit 1, a binuclear center (BNC) formed by heme A3 and copper B (CU(B)). The BNC reduces molecular oxygen to 2 water molecules using 4 electrons from cytochrome c in the IMS and 4 protons from the mitochondrial matrix. This chain is Cytochrome c oxidase subunit 3 (MT-CO3), found in Coturnix japonica (Japanese quail).